A 54-amino-acid polypeptide reads, in one-letter code: Large ribosomal subunit protein bL33 (54 aa).

It belongs to the bacterial ribosomal protein bL33 family.

The chain is Large ribosomal subunit protein bL33 from Xylella fastidiosa (strain M23).